We begin with the raw amino-acid sequence, 355 residues long: 3-dehydroquinate synthase (355 aa).

Residues Gly-105–Asp-109, Thr-129–Ser-130, Lys-142, Lys-151, and Thr-169–Thr-172 contribute to the NAD(+) site. Zn(2+)-binding residues include Glu-184, His-246, and His-263.

This sequence belongs to the sugar phosphate cyclases superfamily. Dehydroquinate synthase family. It depends on NAD(+) as a cofactor. Co(2+) is required as a cofactor. The cofactor is Zn(2+).

It is found in the cytoplasm. The catalysed reaction is 7-phospho-2-dehydro-3-deoxy-D-arabino-heptonate = 3-dehydroquinate + phosphate. Its pathway is metabolic intermediate biosynthesis; chorismate biosynthesis; chorismate from D-erythrose 4-phosphate and phosphoenolpyruvate: step 2/7. Its function is as follows. Catalyzes the conversion of 3-deoxy-D-arabino-heptulosonate 7-phosphate (DAHP) to dehydroquinate (DHQ). The chain is 3-dehydroquinate synthase from Streptococcus agalactiae serotype V (strain ATCC BAA-611 / 2603 V/R).